A 239-amino-acid chain; its full sequence is tRNA (guanine-N(7)-)-methyltransferase (239 aa).

S-adenosyl-L-methionine is bound by residues E69, E94, D121, and D144. D144 is an active-site residue. K148 serves as a coordination point for substrate. Residues 150–155 (RHNKRR) are interaction with RNA. Residues D180 and 217–220 (TKFE) each bind substrate.

Belongs to the class I-like SAM-binding methyltransferase superfamily. TrmB family. As to quaternary structure, monomer.

The enzyme catalyses guanosine(46) in tRNA + S-adenosyl-L-methionine = N(7)-methylguanosine(46) in tRNA + S-adenosyl-L-homocysteine. The protein operates within tRNA modification; N(7)-methylguanine-tRNA biosynthesis. Catalyzes the formation of N(7)-methylguanine at position 46 (m7G46) in tRNA. This Sodalis glossinidius (strain morsitans) protein is tRNA (guanine-N(7)-)-methyltransferase.